Here is a 116-residue protein sequence, read N- to C-terminus: Protein Rev (116 aa).

Phosphoserine; by host CK2 occurs at positions 5 and 8. The interval Leu-18 to Asn-26 is homomultimerization. A disordered region spans residues Tyr-23–Arg-48. The Nuclear localization signal and RNA-binding (RRE) motif lies at Thr-34–Arg-50. Basic residues predominate over residues Gln-36–Glu-47. The Nuclear export signal and binding to XPO1 signature appears at Leu-73–Asp-84. 2 positions are modified to phosphoserine; by host: Ser-92 and Ser-99. The segment at Ser-92–Glu-116 is disordered.

Belongs to the HIV-1 REV protein family. As to quaternary structure, homomultimer; when bound to the RRE. Multimeric assembly is essential for activity and may involve XPO1. Binds to human KPNB1, XPO1, TNPO1, RANBP5 and IPO7. Interacts with the viral Integrase. Interacts with human KHDRBS1. Interacts with human NAP1; this interaction decreases Rev multimerization and stimulates its activity. Interacts with human DEAD-box helicases DDX3 and DDX24; these interactions may serve for viral RNA export to the cytoplasm and packaging, respectively. Interacts with human PSIP1; this interaction may inhibit HIV-1 DNA integration by promoting dissociation of the Integrase-LEDGF/p75 complex. Post-translationally, asymmetrically arginine dimethylated at one site by host PRMT6. Methylation impairs the RNA-binding activity and export of viral RNA from the nucleus to the cytoplasm. In terms of processing, phosphorylated by protein kinase CK2. Presence of, and maybe binding to the N-terminus of the regulatory beta subunit of CK2 is necessary for CK2-mediated Rev's phosphorylation.

It is found in the host nucleus. It localises to the host nucleolus. The protein localises to the host cytoplasm. Its function is as follows. Escorts unspliced or incompletely spliced viral pre-mRNAs (late transcripts) out of the nucleus of infected cells. These pre-mRNAs carry a recognition sequence called Rev responsive element (RRE) located in the env gene, that is not present in fully spliced viral mRNAs (early transcripts). This function is essential since most viral proteins are translated from unspliced or partially spliced pre-mRNAs which cannot exit the nucleus by the pathway used by fully processed cellular mRNAs. Rev itself is translated from a fully spliced mRNA that readily exits the nucleus. Rev's nuclear localization signal (NLS) binds directly to KPNB1/Importin beta-1 without previous binding to KPNA1/Importin alpha-1. KPNB1 binds to the GDP bound form of RAN (Ran-GDP) and targets Rev to the nucleus. In the nucleus, the conversion from Ran-GDP to Ran-GTP dissociates Rev from KPNB1 and allows Rev's binding to the RRE in viral pre-mRNAs. Rev multimerization on the RRE via cooperative assembly exposes its nuclear export signal (NES) to the surface. Rev can then form a complex with XPO1/CRM1 and Ran-GTP, leading to nuclear export of the complex. Conversion from Ran-GTP to Ran-GDP mediates dissociation of the Rev/RRE/XPO1/RAN complex, so that Rev can return to the nucleus for a subsequent round of export. Beside KPNB1, also seems to interact with TNPO1/Transportin-1, RANBP5/IPO5 and IPO7/RANBP7 for nuclear import. The nucleoporin-like HRB/RIP is an essential cofactor that probably indirectly interacts with Rev to release HIV RNAs from the perinuclear region to the cytoplasm. The polypeptide is Protein Rev (Human immunodeficiency virus type 1 group M subtype B (isolate SC) (HIV-1)).